We begin with the raw amino-acid sequence, 155 residues long: 6,7-dimethyl-8-ribityllumazine synthase (155 aa).

5-amino-6-(D-ribitylamino)uracil-binding positions include Trp18, 52-54, and 76-78; these read AFE and LVV. The Proton donor role is filled by Arg84. Ser109 lines the 5-amino-6-(D-ribitylamino)uracil pocket. (2S)-2-hydroxy-3-oxobutyl phosphate is bound at residue His123.

This sequence belongs to the DMRL synthase family.

The enzyme catalyses (2S)-2-hydroxy-3-oxobutyl phosphate + 5-amino-6-(D-ribitylamino)uracil = 6,7-dimethyl-8-(1-D-ribityl)lumazine + phosphate + 2 H2O + H(+). Its pathway is cofactor biosynthesis; riboflavin biosynthesis; riboflavin from 2-hydroxy-3-oxobutyl phosphate and 5-amino-6-(D-ribitylamino)uracil: step 1/2. Functionally, catalyzes the formation of 6,7-dimethyl-8-ribityllumazine by condensation of 5-amino-6-(D-ribitylamino)uracil with 3,4-dihydroxy-2-butanone 4-phosphate. This is the penultimate step in the biosynthesis of riboflavin. This is 6,7-dimethyl-8-ribityllumazine synthase from Rhodococcus erythropolis (Arthrobacter picolinophilus).